A 190-amino-acid chain; its full sequence is Holliday junction branch migration complex subunit RuvA (190 aa).

The interval 1–64 is domain I; that stretch reads MIGRISGQLA…EDAQILYGFG (64 aa). Residues 65–137 are domain II; that stretch reads SATERAAFRQ…LKGKLGADIG (73 aa). The flexible linker stretch occupies residues 137–141; that stretch reads GVQVS. The segment at 142–190 is domain III; sequence VSSDSQSDILQALVALGYSDRDAALALKALPKDIGVSDGIKLALKALAK.

Belongs to the RuvA family. Homotetramer. Forms an RuvA(8)-RuvB(12)-Holliday junction (HJ) complex. HJ DNA is sandwiched between 2 RuvA tetramers; dsDNA enters through RuvA and exits via RuvB. An RuvB hexamer assembles on each DNA strand where it exits the tetramer. Each RuvB hexamer is contacted by two RuvA subunits (via domain III) on 2 adjacent RuvB subunits; this complex drives branch migration. In the full resolvosome a probable DNA-RuvA(4)-RuvB(12)-RuvC(2) complex forms which resolves the HJ.

It localises to the cytoplasm. Its function is as follows. The RuvA-RuvB-RuvC complex processes Holliday junction (HJ) DNA during genetic recombination and DNA repair, while the RuvA-RuvB complex plays an important role in the rescue of blocked DNA replication forks via replication fork reversal (RFR). RuvA specifically binds to HJ cruciform DNA, conferring on it an open structure. The RuvB hexamer acts as an ATP-dependent pump, pulling dsDNA into and through the RuvAB complex. HJ branch migration allows RuvC to scan DNA until it finds its consensus sequence, where it cleaves and resolves the cruciform DNA. The polypeptide is Holliday junction branch migration complex subunit RuvA (Polaromonas sp. (strain JS666 / ATCC BAA-500)).